Reading from the N-terminus, the 495-residue chain is Aspartyl/glutamyl-tRNA(Asn/Gln) amidotransferase subunit B (495 aa).

Belongs to the GatB/GatE family. GatB subfamily. As to quaternary structure, heterotrimer of A, B and C subunits.

It catalyses the reaction L-glutamyl-tRNA(Gln) + L-glutamine + ATP + H2O = L-glutaminyl-tRNA(Gln) + L-glutamate + ADP + phosphate + H(+). It carries out the reaction L-aspartyl-tRNA(Asn) + L-glutamine + ATP + H2O = L-asparaginyl-tRNA(Asn) + L-glutamate + ADP + phosphate + 2 H(+). Its function is as follows. Allows the formation of correctly charged Asn-tRNA(Asn) or Gln-tRNA(Gln) through the transamidation of misacylated Asp-tRNA(Asn) or Glu-tRNA(Gln) in organisms which lack either or both of asparaginyl-tRNA or glutaminyl-tRNA synthetases. The reaction takes place in the presence of glutamine and ATP through an activated phospho-Asp-tRNA(Asn) or phospho-Glu-tRNA(Gln). The protein is Aspartyl/glutamyl-tRNA(Asn/Gln) amidotransferase subunit B of Methylocella silvestris (strain DSM 15510 / CIP 108128 / LMG 27833 / NCIMB 13906 / BL2).